Consider the following 543-residue polypeptide: Carboxypeptidase Y homolog A (543 aa).

A signal peptide spans 1–17 (MKFLTTGLLATAALAAA). Positions 18–124 (QEQQVLQAED…KLHNYDLRVK (107 aa)) are excised as a propeptide. 5 cysteine pairs are disulfide-bonded: Cys179/Cys419, Cys313/Cys327, Cys337/Cys360, Cys344/Cys353, and Cys382/Cys389. Asn210 carries an N-linked (GlcNAc...) asparagine glycan. Ser266 is a catalytic residue. Asp458 is a catalytic residue. A glycan (N-linked (GlcNAc...) asparagine) is linked at Asn509. Residue His520 is part of the active site.

The protein belongs to the peptidase S10 family.

The protein localises to the vacuole. The catalysed reaction is Release of a C-terminal amino acid with broad specificity.. Vacuolar carboxypeptidase involved in degradation of small peptides. Digests preferentially peptides containing an aliphatic or hydrophobic residue in P1' position, as well as methionine, leucine or phenylalanine in P1 position of ester substrate. The polypeptide is Carboxypeptidase Y homolog A (CPYA) (Trichophyton equinum (Horse ringworm fungus)).